The sequence spans 485 residues: CCA-adding enzyme (485 aa).

ATP-binding residues include Ser53 and Arg56. Ser53 and Arg56 together coordinate CTP. Mg(2+) contacts are provided by Asp65, Asp67, and Asp124. The ATP site is built by His146, Lys164, and Tyr173. Residues His146, Lys164, and Tyr173 each coordinate CTP.

The protein belongs to the tRNA nucleotidyltransferase/poly(A) polymerase family. Archaeal CCA-adding enzyme subfamily. Homodimer. Mg(2+) is required as a cofactor.

The catalysed reaction is a tRNA precursor + 2 CTP + ATP = a tRNA with a 3' CCA end + 3 diphosphate. The enzyme catalyses a tRNA with a 3' CCA end + 2 CTP + ATP = a tRNA with a 3' CCACCA end + 3 diphosphate. In terms of biological role, catalyzes the addition and repair of the essential 3'-terminal CCA sequence in tRNAs without using a nucleic acid template. Adds these three nucleotides in the order of C, C, and A to the tRNA nucleotide-73, using CTP and ATP as substrates and producing inorganic pyrophosphate. tRNA 3'-terminal CCA addition is required both for tRNA processing and repair. Also involved in tRNA surveillance by mediating tandem CCA addition to generate a CCACCA at the 3' terminus of unstable tRNAs. While stable tRNAs receive only 3'-terminal CCA, unstable tRNAs are marked with CCACCA and rapidly degraded. This Methanopyrus kandleri (strain AV19 / DSM 6324 / JCM 9639 / NBRC 100938) protein is CCA-adding enzyme.